Here is a 381-residue protein sequence, read N- to C-terminus: Queuine tRNA-ribosyltransferase (381 aa).

Asp-89 acts as the Proton acceptor in catalysis. Substrate-binding positions include 89-93, Asp-143, Gln-187, and Gly-214; that span reads DSGGF. Positions 245-251 are RNA binding; sequence GVGKPED. Residue Asp-264 is the Nucleophile of the active site. Residues 269–273 are RNA binding; important for wobble base 34 recognition; the sequence is TRNAR. Zn(2+) contacts are provided by Cys-302, Cys-304, Cys-307, and His-333.

Belongs to the queuine tRNA-ribosyltransferase family. Homodimer. Within each dimer, one monomer is responsible for RNA recognition and catalysis, while the other monomer binds to the replacement base PreQ1. Zn(2+) serves as cofactor.

The catalysed reaction is 7-aminomethyl-7-carbaguanine + guanosine(34) in tRNA = 7-aminomethyl-7-carbaguanosine(34) in tRNA + guanine. It participates in tRNA modification; tRNA-queuosine biosynthesis. Its function is as follows. Catalyzes the base-exchange of a guanine (G) residue with the queuine precursor 7-aminomethyl-7-deazaguanine (PreQ1) at position 34 (anticodon wobble position) in tRNAs with GU(N) anticodons (tRNA-Asp, -Asn, -His and -Tyr). Catalysis occurs through a double-displacement mechanism. The nucleophile active site attacks the C1' of nucleotide 34 to detach the guanine base from the RNA, forming a covalent enzyme-RNA intermediate. The proton acceptor active site deprotonates the incoming PreQ1, allowing a nucleophilic attack on the C1' of the ribose to form the product. After dissociation, two additional enzymatic reactions on the tRNA convert PreQ1 to queuine (Q), resulting in the hypermodified nucleoside queuosine (7-(((4,5-cis-dihydroxy-2-cyclopenten-1-yl)amino)methyl)-7-deazaguanosine). The chain is Queuine tRNA-ribosyltransferase from Pectobacterium atrosepticum (strain SCRI 1043 / ATCC BAA-672) (Erwinia carotovora subsp. atroseptica).